A 210-amino-acid chain; its full sequence is Large ribosomal subunit protein uL3 (210 aa).

The tract at residues Gly131–Thr155 is disordered.

This sequence belongs to the universal ribosomal protein uL3 family. As to quaternary structure, part of the 50S ribosomal subunit. Forms a cluster with proteins L14 and L19.

In terms of biological role, one of the primary rRNA binding proteins, it binds directly near the 3'-end of the 23S rRNA, where it nucleates assembly of the 50S subunit. In Thermoanaerobacter sp. (strain X514), this protein is Large ribosomal subunit protein uL3.